A 1047-amino-acid polypeptide reads, in one-letter code: Isoleucine--tRNA ligase (1047 aa).

Positions 52-62 (PTANGMPGAHH) match the 'HIGH' region motif. A 'KMSKS' region motif is present at residues 600–604 (KMSKH). An ATP-binding site is contributed by K603.

The protein belongs to the class-I aminoacyl-tRNA synthetase family. IleS type 2 subfamily. In terms of assembly, monomer. It depends on Zn(2+) as a cofactor.

It is found in the cytoplasm. It carries out the reaction tRNA(Ile) + L-isoleucine + ATP = L-isoleucyl-tRNA(Ile) + AMP + diphosphate. In terms of biological role, catalyzes the attachment of isoleucine to tRNA(Ile). As IleRS can inadvertently accommodate and process structurally similar amino acids such as valine, to avoid such errors it has two additional distinct tRNA(Ile)-dependent editing activities. One activity is designated as 'pretransfer' editing and involves the hydrolysis of activated Val-AMP. The other activity is designated 'posttransfer' editing and involves deacylation of mischarged Val-tRNA(Ile). The chain is Isoleucine--tRNA ligase from Streptomyces coelicolor (strain ATCC BAA-471 / A3(2) / M145).